The primary structure comprises 112 residues: Ribonuclease VapC8 (112 aa).

Positions 10 to 109 constitute a PINc domain; sequence LLDTSVFIAR…TDALIAATAE (100 aa). Asp12 and Asp101 together coordinate Mg(2+).

Belongs to the PINc/VapC protein family. Requires Mg(2+) as cofactor.

Toxic component of a type II toxin-antitoxin (TA) system. An RNase. The cognate antitoxin is VapB8. This chain is Ribonuclease VapC8 (vapC8), found in Mycobacterium tuberculosis (strain CDC 1551 / Oshkosh).